Consider the following 294-residue polypeptide: 33 kDa chaperonin (294 aa).

2 cysteine pairs are disulfide-bonded: cysteine 238–cysteine 240 and cysteine 271–cysteine 274.

The protein belongs to the HSP33 family. In terms of processing, under oxidizing conditions two disulfide bonds are formed involving the reactive cysteines. Under reducing conditions zinc is bound to the reactive cysteines and the protein is inactive.

It is found in the cytoplasm. In terms of biological role, redox regulated molecular chaperone. Protects both thermally unfolding and oxidatively damaged proteins from irreversible aggregation. Plays an important role in the bacterial defense system toward oxidative stress. This chain is 33 kDa chaperonin, found in Clostridium novyi (strain NT).